Reading from the N-terminus, the 301-residue chain is Ribonuclease HIII (301 aa).

One can recognise an RNase H type-2 domain in the interval A84–K301. Residues D90, E91, and D195 each contribute to the a divalent metal cation site.

This sequence belongs to the RNase HII family. RnhC subfamily. Requires Mn(2+) as cofactor. Mg(2+) serves as cofactor.

It is found in the cytoplasm. It catalyses the reaction Endonucleolytic cleavage to 5'-phosphomonoester.. Its function is as follows. Endonuclease that specifically degrades the RNA of RNA-DNA hybrids. The polypeptide is Ribonuclease HIII (Geobacillus sp. (strain WCH70)).